A 428-amino-acid polypeptide reads, in one-letter code: Type II methyltransferase M.BanI (428 aa).

The SAM-dependent MTase C5-type domain occupies 3 to 417 (IKFVDLFAGI…EDLFQNNVNE (415 aa)). Residue cysteine 76 is part of the active site.

This sequence belongs to the class I-like SAM-binding methyltransferase superfamily. C5-methyltransferase family. In terms of assembly, monomer.

The catalysed reaction is a 2'-deoxycytidine in DNA + S-adenosyl-L-methionine = a 5-methyl-2'-deoxycytidine in DNA + S-adenosyl-L-homocysteine + H(+). A methylase, recognizes the double-stranded sequence 5'-GGYRCC-3', methylates C-4 on both strands, and protects the DNA from cleavage by the BanI endonuclease. The protein is Type II methyltransferase M.BanI (banIM) of Aneurinibacillus aneurinilyticus (Bacillus aneurinolyticus).